We begin with the raw amino-acid sequence, 244 residues long: Ureidoacrylate amidohydrolase RutB (244 aa).

The active-site Proton acceptor is the aspartate 38. Lysine 147 is a catalytic residue. Cysteine 180 (nucleophile) is an active-site residue.

This sequence belongs to the isochorismatase family. RutB subfamily.

The catalysed reaction is (Z)-3-ureidoacrylate + H2O + H(+) = (Z)-3-aminoacrylate + NH4(+) + CO2. It catalyses the reaction (Z)-3-ureidoacrylate + H2O = (Z)-3-aminoacrylate + carbamate + H(+). It carries out the reaction (Z)-2-methylureidoacrylate + H2O + H(+) = (Z)-2-methylaminoacrylate + NH4(+) + CO2. Functionally, hydrolyzes ureidoacrylate to form aminoacrylate and carbamate. The carbamate hydrolyzes spontaneously, thereby releasing one of the nitrogen atoms of the pyrimidine ring as ammonia and one of its carbon atoms as CO2. This is Ureidoacrylate amidohydrolase RutB from Escherichia coli O6:H1 (strain CFT073 / ATCC 700928 / UPEC).